Reading from the N-terminus, the 104-residue chain is Viral histone-like protein (104 aa).

The protein belongs to the bacterial histone-like protein family. Homodimer.

The protein localises to the virion. Stilbene derivatives SD1 and SD4 disrupt the binding between pA104R and DNA and inhibit the viral replication in primary alveolar macrophages. In terms of biological role, DNA-binding protein that plays a critical role in nucleoid compaction, genome replication and DNA replication and transcription. Binds to both ssDNA and dsDNA with a binding site covering about 15 nucleotides. Displays DNA-supercoiling activity only when associated with the viral DNA topoisomerase 2. The polypeptide is Viral histone-like protein (African swine fever virus (strain Badajoz 1971 Vero-adapted) (Ba71V)).